The primary structure comprises 2058 residues: E3 ubiquitin-protein ligase ubr-1 (2058 aa).

The UBR-type zinc-finger motif lies at Q93–K164. The disordered stretch occupies residues V1107–V1175. Positions P1108 to A1119 are enriched in low complexity. Composition is skewed to basic and acidic residues over residues E1123–Q1138 and K1153–V1175. The RING-type; atypical zinc finger occupies L1217 to R1335. Disordered stretches follow at residues L1381–N1416 and P1475–K1499. Positions K1388 to H1397 are enriched in basic residues. The span at S1398 to D1413 shows a compositional bias: basic and acidic residues. Over residues G1486 to Q1495 the composition is skewed to polar residues. The chain crosses the membrane as a helical span at residues I1695–W1715.

It belongs to the E3 ubiquitin-protein ligase UBR1-like family. Interacts with ubc-1. Component of a complex containing at least ced-3, ubr-1 and possibly ate-1. Within complex interacts with ced-3 (via the p17 subunit); this interaction is required for the ced-3-mediated cleavage and subsequent degradation of the heterochronic protein lin-28. As to expression, expressed in pharyngeal muscles, body wall muscles and a subset of neurons throughout postembryonic development. Prominently expressed in premotor interneurons, but not expressed in ventral cord motor neurons. Weakly expressed in hypodermal seam cells.

It localises to the membrane. It catalyses the reaction S-ubiquitinyl-[E2 ubiquitin-conjugating enzyme]-L-cysteine + [acceptor protein]-L-lysine = [E2 ubiquitin-conjugating enzyme]-L-cysteine + N(6)-ubiquitinyl-[acceptor protein]-L-lysine.. Its pathway is protein modification; protein ubiquitination. E3 ubiquitin-protein ligase which is a component of the N-end rule pathway. Recognizes and binds to proteins bearing specific N-terminal residues that are destabilizing according to the N-end rule, leading to their ubiquitination and subsequent degradation. In complex with ced-3, required for the ced-3-mediated cleavage and subsequent degradation of the heterochronic protein lin-28 to regulate seam cell fate patterning during larval development. Negatively regulates glutamate metabolism through the aspartate aminotransferase got-1.2. Modulation of glutamate levels most likely controls locomotory behavior, in particular backwards locomotion or 'reversals'. This Caenorhabditis elegans protein is E3 ubiquitin-protein ligase ubr-1.